Here is a 663-residue protein sequence, read N- to C-terminus: Innate immunity activator protein (663 aa).

The tract at residues 1–73 is disordered; that stretch reads MLQMPKLNEI…PGPGWDQCSP (73 aa). Positions 23 to 47 are enriched in low complexity; that stretch reads EGRWAGPTGPEAARPARGARGQARG. The span at 50-59 shows a compositional bias: basic and acidic residues; sequence ARWDSWEHSR. A coiled-coil region spans residues 117–147; it reads NAVRKQQRALEARLEACLEELRRLCLREAEL. The short motif at 164-170 is the Nuclear localization signal (NLS) 1 element; it reads PKVRRRI. Disordered regions lie at residues 219 to 363 and 375 to 405; these read RQRK…SSLW and IRNVPGQRQGRTSAPATPEMQGRRGQSQSLR. Positions 225–246 are enriched in basic and acidic residues; that stretch reads ALQEEKKLRDLQRCLGDRRRNS. Positions 259 to 272 are enriched in low complexity; that stretch reads ELSASDDSSLSDGL. Positions 282 to 298 are enriched in pro residues; it reads PKPPPESPAPPSRPLPP. Positions 327–340 are enriched in basic and acidic residues; the sequence is TSLDHPYEKPRKSS. The Nuclear localization signal (NLS) 2 signature appears at 332-338; sequence PYEKPRK. Residues 349-361 show a composition bias toward polar residues; sequence PATTPQDQPNPSS. The Nuclear localization signal (NLS) 3 motif lies at 422–428; it reads PRRRPTH. The tract at residues 448–483 is disordered; it reads PACHSCSEDSGSDVSSISHPTSPGSSSPDISFLRPL. Residues 455-475 are compositionally biased toward low complexity; the sequence is EDSGSDVSSISHPTSPGSSSP.

As to quaternary structure, interacts with IRAK1, NOD2 and RIPK2; the interaction takes place upon PRR stimulation. Interacts with YWHAQ/14-3-3T; the interaction increases upon PRR stimulation and is required for cellular signaling pathway activation and cytokine secretion. Interacts (via N-terminal domain) with CYTH1 and CYTH2 (via their N-terminal domains). Interacts with FBXW11 and BTRC; associates with SCF E3 ubiquitin-protein ligase complexes.

It is found in the nucleus. Its subcellular location is the cytoplasm. Expressed in peripheral macrophages and intestinal myeloid-derived cells, is required for optimal PRR (pattern recognition receptor)-induced signaling, cytokine secretion, and bacterial clearance. Upon stimulation of a broad range of PRRs (pattern recognition receptor) such as NOD2 or TLR2, TLR3, TLR4, TLR5, TLR7 and TLR9, associates with YWHAQ/14-3-3T, which in turn leads to the recruitment and activation of MAP kinases and NF-kappa-B signaling complexes that amplifies PRR-induced downstream signals and cytokine secretion. In the intestine, regulates adherens junction stability by regulating the degradation of CYTH1 and CYTH2, probably acting as substrate cofactor for SCF E3 ubiquitin-protein ligase complexes. Stabilizes adherens junctions by limiting CYTH1-dependent ARF6 activation. This chain is Innate immunity activator protein, found in Mus musculus (Mouse).